The sequence spans 242 residues: 1-(5-phosphoribosyl)-5-[(5-phosphoribosylamino)methylideneamino] imidazole-4-carboxamide isomerase (242 aa).

Asp8 (proton acceptor) is an active-site residue. The active-site Proton donor is Asp130.

This sequence belongs to the HisA/HisF family.

It is found in the cytoplasm. The enzyme catalyses 1-(5-phospho-beta-D-ribosyl)-5-[(5-phospho-beta-D-ribosylamino)methylideneamino]imidazole-4-carboxamide = 5-[(5-phospho-1-deoxy-D-ribulos-1-ylimino)methylamino]-1-(5-phospho-beta-D-ribosyl)imidazole-4-carboxamide. It participates in amino-acid biosynthesis; L-histidine biosynthesis; L-histidine from 5-phospho-alpha-D-ribose 1-diphosphate: step 4/9. The polypeptide is 1-(5-phosphoribosyl)-5-[(5-phosphoribosylamino)methylideneamino] imidazole-4-carboxamide isomerase (Thioalkalivibrio sulfidiphilus (strain HL-EbGR7)).